Consider the following 294-residue polypeptide: Nucleotide-binding protein NT01CX_1284 (294 aa).

8–15 (GLSGAGKS) contributes to the ATP binding site. 59–62 (DIRG) is a binding site for GTP.

This sequence belongs to the RapZ-like family.

Functionally, displays ATPase and GTPase activities. The polypeptide is Nucleotide-binding protein NT01CX_1284 (Clostridium novyi (strain NT)).